The following is a 322-amino-acid chain: Ribonuclease Z (322 aa).

His-60, His-62, Asp-64, His-65, His-140, Asp-210, and His-270 together coordinate Zn(2+). Asp-64 functions as the Proton acceptor in the catalytic mechanism.

It belongs to the RNase Z family. Homodimer. Zn(2+) is required as a cofactor.

It catalyses the reaction Endonucleolytic cleavage of RNA, removing extra 3' nucleotides from tRNA precursor, generating 3' termini of tRNAs. A 3'-hydroxy group is left at the tRNA terminus and a 5'-phosphoryl group is left at the trailer molecule.. In terms of biological role, zinc phosphodiesterase, which displays some tRNA 3'-processing endonuclease activity. Probably involved in tRNA maturation, by removing a 3'-trailer from precursor tRNA. The protein is Ribonuclease Z of Methanococcus aeolicus (strain ATCC BAA-1280 / DSM 17508 / OCM 812 / Nankai-3).